The sequence spans 224 residues: Large ribosomal subunit protein bL25 (224 aa).

The disordered stretch occupies residues 195-224; that stretch reads TVEEVDEAAEVDAADVPATEQGTDESKDGE. Acidic residues predominate over residues 197–207; that stretch reads EEVDEAAEVDA.

The protein belongs to the bacterial ribosomal protein bL25 family. CTC subfamily. In terms of assembly, part of the 50S ribosomal subunit; part of the 5S rRNA/L5/L18/L25 subcomplex. Contacts the 5S rRNA. Binds to the 5S rRNA independently of L5 and L18.

This is one of the proteins that binds to the 5S RNA in the ribosome where it forms part of the central protuberance. The protein is Large ribosomal subunit protein bL25 of Psychrobacter cryohalolentis (strain ATCC BAA-1226 / DSM 17306 / VKM B-2378 / K5).